Here is a 156-residue protein sequence, read N- to C-terminus: Putative pre-16S rRNA nuclease (156 aa).

The protein belongs to the YqgF nuclease family.

It localises to the cytoplasm. Its function is as follows. Could be a nuclease involved in processing of the 5'-end of pre-16S rRNA. This is Putative pre-16S rRNA nuclease from Ehrlichia canis (strain Jake).